The primary structure comprises 582 residues: Arginine--tRNA ligase (582 aa).

A 'HIGH' region motif is present at residues 127–137 (PNLAKEMHVGH).

Belongs to the class-I aminoacyl-tRNA synthetase family. Monomer.

The protein resides in the cytoplasm. It catalyses the reaction tRNA(Arg) + L-arginine + ATP = L-arginyl-tRNA(Arg) + AMP + diphosphate. The polypeptide is Arginine--tRNA ligase (Psychromonas ingrahamii (strain DSM 17664 / CCUG 51855 / 37)).